The primary structure comprises 86 residues: Cytochrome c oxidase subunit 12, mitochondrial (86 aa).

Residues 30-73 form the CHCH domain; sequence TKHCFQSYIDYFRCIKAKGEDFVPCKQFWHAYQSLCPMEWVERW. The short motif at 33–43 is the Cx9C motif element; sequence CFQSYIDYFRC. 2 cysteine pairs are disulfide-bonded: Cys33–Cys65 and Cys43–Cys54. The short motif at 54 to 65 is the Cx10C motif element; it reads CKQFWHAYQSLC.

This sequence belongs to the cytochrome c oxidase subunit 6B family. Component of the cytochrome c oxidase (complex IV, CIV), a multisubunit enzyme composed of a catalytic core of 3 subunits and several supernumerary subunits. The complex exists as a monomer or a dimer and forms supercomplexes (SCs) in the inner mitochondrial membrane with ubiquinol-cytochrome c oxidoreductase (cytochrome b-c1 complex, complex III, CIII).

It is found in the mitochondrion inner membrane. The protein operates within energy metabolism; oxidative phosphorylation. Component of the cytochrome c oxidase, the last enzyme in the mitochondrial electron transport chain which drives oxidative phosphorylation. The respiratory chain contains 3 multisubunit complexes succinate dehydrogenase (complex II, CII), ubiquinol-cytochrome c oxidoreductase (cytochrome b-c1 complex, complex III, CIII) and cytochrome c oxidase (complex IV, CIV), that cooperate to transfer electrons derived from NADH and succinate to molecular oxygen, creating an electrochemical gradient over the inner membrane that drives transmembrane transport and the ATP synthase. Cytochrome c oxidase is the component of the respiratory chain that catalyzes the reduction of oxygen to water. Electrons originating from reduced cytochrome c in the intermembrane space (IMS) are transferred via the dinuclear copper A center (CU(A)) of subunit 2 and heme A of subunit 1 to the active site in subunit 1, a binuclear center (BNC) formed by heme A3 and copper B (CU(B)). The BNC reduces molecular oxygen to 2 water molecules using 4 electrons from cytochrome c in the IMS and 4 protons from the mitochondrial matrix. The chain is Cytochrome c oxidase subunit 12, mitochondrial (cox12) from Schizosaccharomyces pombe (strain 972 / ATCC 24843) (Fission yeast).